The chain runs to 319 residues: Large ribosomal subunit protein eL8 (319 aa).

An N6-acetyllysine modification is found at lysine 87. Residue lysine 101 forms a Glycyl lysine isopeptide (Lys-Gly) (interchain with G-Cter in SUMO2) linkage. N6-acetyllysine; alternate is present on lysine 150. Lysine 150 is covalently cross-linked (Glycyl lysine isopeptide (Lys-Gly) (interchain with G-Cter in SUMO2); alternate). Residue lysine 178 forms a Glycyl lysine isopeptide (Lys-Gly) (interchain with G-Cter in SUMO2) linkage. Lysine 270 carries the N6-acetyllysine modification. A Glycyl lysine isopeptide (Lys-Gly) (interchain with G-Cter in SUMO2) cross-link involves residue lysine 298.

It belongs to the eukaryotic ribosomal protein eL8 family. As to quaternary structure, component of the large ribosomal subunit. Interacts with CRY1. Interacts with DICER1, AGO2, TARBP2, MOV10 and EIF6; they form a large RNA-induced silencing complex (RISC).

The protein resides in the cytoplasm. In terms of biological role, component of the large ribosomal subunit. The ribosome is a large ribonucleoprotein complex responsible for the synthesis of proteins in the cell. This chain is Large ribosomal subunit protein eL8 (RPL7A), found in Oryctolagus cuniculus (Rabbit).